Reading from the N-terminus, the 44-residue chain is pyr operon leader peptide (44 aa).

The polypeptide is pyr operon leader peptide (pyrL) (Escherichia coli O157:H7).